A 1045-amino-acid chain; its full sequence is Endoglucanase B (1045 aa).

An N-terminal signal peptide occupies residues 1 to 33 (MLRQVPRTLVAGGSALAVAVGVLVAPLATGAAA). The tract at residues 34 to 492 (APTYNYAEAL…LASFPTPEQP (459 aa)) is catalytic. Asp-91 functions as the Nucleophile in the catalytic mechanism. Catalysis depends on residues His-410, Asp-449, and Glu-458. Positions 493–642 (DGDQLFVEAM…STLVWGKEPT (150 aa)) constitute a CBM3 domain. 4 linker ('hinge') (Pro-Thr box) regions span residues 644 to 650 (TTTDTTP), 734 to 748 (AAVTFTTDTTGETEP), 831 to 846 (APVTFTTAAPPVDTVA), and 931 to 944 (SPVTFTTLPVTSTP). 3 consecutive Fibronectin type-III domains span residues 653 to 743 (TPGT…TDTT), 751 to 840 (TPGT…TAAP), and 849 to 940 (VPGT…TLPV). The 107-residue stretch at 939-1045 (PVTSTPSCTV…SFTVNGEVCG (107 aa)) folds into the CBM2 domain. A disulfide bridge connects residues Cys-946 and Cys-1044.

Belongs to the glycosyl hydrolase 9 (cellulase E) family.

The enzyme catalyses Endohydrolysis of (1-&gt;4)-beta-D-glucosidic linkages in cellulose, lichenin and cereal beta-D-glucans.. The biological conversion of cellulose to glucose generally requires three types of hydrolytic enzymes: (1) Endoglucanases which cut internal beta-1,4-glucosidic bonds; (2) Exocellobiohydrolases that cut the disaccharide cellobiose from the non-reducing end of the cellulose polymer chain; (3) Beta-1,4-glucosidases which hydrolyze the cellobiose and other short cello-oligosaccharides to glucose. This chain is Endoglucanase B (cenB), found in Cellulomonas fimi.